Consider the following 82-residue polypeptide: Small ribosomal subunit protein bS18A (82 aa).

It belongs to the bacterial ribosomal protein bS18 family. As to quaternary structure, part of the 30S ribosomal subunit. Forms a tight heterodimer with protein bS6.

Functionally, binds as a heterodimer with protein bS6 to the central domain of the 16S rRNA, where it helps stabilize the platform of the 30S subunit. This is Small ribosomal subunit protein bS18A from Streptomyces griseus subsp. griseus (strain JCM 4626 / CBS 651.72 / NBRC 13350 / KCC S-0626 / ISP 5235).